The chain runs to 1320 residues: Poly [ADP-ribose] polymerase tankyrase-1 (1320 aa).

Over residues Met-1–Gln-15 the composition is skewed to basic residues. Disordered regions lie at residues Met-1 to Val-88 and Ala-111 to Val-152. Residues Ser-25–Ala-46 are compositionally biased toward pro residues. Basic and acidic residues predominate over residues Asp-69–Asp-82. Residues Asn-120 to Val-152 are compositionally biased toward low complexity. ANK repeat units follow at residues Gly-174–Ala-202, Arg-208–Ala-237, Gly-241–Ala-270, Trp-274–Ile-303, Arg-361–Ala-390, Gly-394–Ala-423, Trp-427–Leu-456, Ser-514–Glu-546, Asp-550–Ala-579, Leu-583–Ile-612, Arg-676–Ala-705, Gly-709–Val-738, Trp-742–Lys-771, Asp-775–Ala-803, Arg-829–Ala-858, Gly-862–Ala-891, Trp-895–Met-924, and Glu-928–Cys-957. The 64-residue stretch at Gly-1019 to Gly-1082 folds into the SAM domain. Residues Ala-1105–Ser-1310 enclose the PARP catalytic domain. Cys-1227, His-1230, Cys-1235, and Cys-1238 together coordinate Zn(2+).

The protein belongs to the ARTD/PARP family. Oligomerizes and associates with TNKS2. Interacts with the cytoplasmic domain of LNPEP/Otase in SLC2A4/GLUT4-vesicles. Binds to the N-terminus of telomeric TERF1 via the ANK repeats. Found in a complex with POT1; TERF1 and TINF2. Interacts with AXIN1. Interacts with AXIN2. Interacts with BLZF1 and CASC3. Interacts with NUMA1. In terms of processing, phosphorylated on serine residues by MAPK kinases upon insulin stimulation. Phosphorylated during mitosis. Post-translationally, ubiquitinated by RNF146 when auto-poly-ADP-ribosylated, leading to its degradation. ADP-ribosylated (-auto). Poly-ADP-ribosylated protein is recognized by RNF146, followed by ubiquitination.

The protein localises to the cytoplasm. The protein resides in the golgi apparatus membrane. It is found in the cytoskeleton. Its subcellular location is the microtubule organizing center. It localises to the centrosome. The protein localises to the nucleus. The protein resides in the nuclear pore complex. It is found in the chromosome. Its subcellular location is the telomere. It localises to the spindle pole. The catalysed reaction is NAD(+) + (ADP-D-ribosyl)n-acceptor = nicotinamide + (ADP-D-ribosyl)n+1-acceptor + H(+).. The enzyme catalyses L-aspartyl-[protein] + NAD(+) = 4-O-(ADP-D-ribosyl)-L-aspartyl-[protein] + nicotinamide. It carries out the reaction L-glutamyl-[protein] + NAD(+) = 5-O-(ADP-D-ribosyl)-L-glutamyl-[protein] + nicotinamide. Its function is as follows. Poly-ADP-ribosyltransferase involved in various processes such as Wnt signaling pathway, telomere length and vesicle trafficking. Acts as an activator of the Wnt signaling pathway by mediating poly-ADP-ribosylation (PARsylation) of AXIN1 and AXIN2, 2 key components of the beta-catenin destruction complex: poly-ADP-ribosylated target proteins are recognized by RNF146, which mediates their ubiquitination and subsequent degradation. Also mediates PARsylation of BLZF1 and CASC3, followed by recruitment of RNF146 and subsequent ubiquitination. Mediates PARsylation of TERF1, thereby contributing to the regulation of telomere length. Involved in centrosome maturation during prometaphase by mediating PARsylation of HEPACAM2/MIKI. May also regulate vesicle trafficking and modulate the subcellular distribution of SLC2A4/GLUT4-vesicles. May be involved in spindle pole assembly through PARsylation of NUMA1. Stimulates 26S proteasome activity. In Mus musculus (Mouse), this protein is Poly [ADP-ribose] polymerase tankyrase-1 (Tnks).